The following is a 790-amino-acid chain: Eukaryotic translation initiation factor 3 subunit C (790 aa).

The tract at residues 1–62 (MSRFFVSGYN…DGRPSGPAYF (62 aa)) is disordered. Positions 14-53 (SSEEEDLLSSEEELLTSSGEENEDSDFFNDDDESSSDEED) are enriched in acidic residues. Residues 556–728 (FHQHINLELL…IVFTTDSQRS (173 aa)) enclose the PCI domain. The tract at residues 748-790 (NEKTSSNGYAKKNQSQTQPQAQSKEVEENKFRYANVNTNTDEF) is disordered. The segment covering 751–770 (TSSNGYAKKNQSQTQPQAQS) has biased composition (polar residues).

This sequence belongs to the eIF-3 subunit C family. As to quaternary structure, component of the eukaryotic translation initiation factor 3 (eIF-3) complex.

Its subcellular location is the cytoplasm. Functionally, component of the eukaryotic translation initiation factor 3 (eIF-3) complex, which is involved in protein synthesis of a specialized repertoire of mRNAs and, together with other initiation factors, stimulates binding of mRNA and methionyl-tRNAi to the 40S ribosome. The eIF-3 complex specifically targets and initiates translation of a subset of mRNAs involved in cell proliferation. The sequence is that of Eukaryotic translation initiation factor 3 subunit C from Lodderomyces elongisporus (strain ATCC 11503 / CBS 2605 / JCM 1781 / NBRC 1676 / NRRL YB-4239) (Yeast).